The primary structure comprises 938 residues: Isoleucine--tRNA ligase (938 aa).

The 'HIGH' region motif lies at 58-68 (PYANGSIHIGH). N6-acetyllysine is present on Lys-183. Glu-561 is a binding site for L-isoleucyl-5'-AMP. The 'KMSKS' region signature appears at 602-606 (KMSKS). Lys-605 contributes to the ATP binding site. Zn(2+) contacts are provided by Cys-901, Cys-904, Cys-921, and Cys-924.

This sequence belongs to the class-I aminoacyl-tRNA synthetase family. IleS type 1 subfamily. As to quaternary structure, monomer. It depends on Zn(2+) as a cofactor.

The protein resides in the cytoplasm. It carries out the reaction tRNA(Ile) + L-isoleucine + ATP = L-isoleucyl-tRNA(Ile) + AMP + diphosphate. Functionally, catalyzes the attachment of isoleucine to tRNA(Ile). As IleRS can inadvertently accommodate and process structurally similar amino acids such as valine, to avoid such errors it has two additional distinct tRNA(Ile)-dependent editing activities. One activity is designated as 'pretransfer' editing and involves the hydrolysis of activated Val-AMP. The other activity is designated 'posttransfer' editing and involves deacylation of mischarged Val-tRNA(Ile). The polypeptide is Isoleucine--tRNA ligase (Escherichia coli O6:H1 (strain CFT073 / ATCC 700928 / UPEC)).